The chain runs to 222 residues: uncharacterized protein (222 aa).

The next 4 membrane-spanning stretches (helical) occupy residues Leu25–Ala45, Leu80–Tyr100, Phe111–Leu131, and Leu160–Phe180.

Its subcellular location is the cell membrane. This is an uncharacterized protein from Bacillus subtilis (strain 168).